Here is a 335-residue protein sequence, read N- to C-terminus: MSSEVLPASIEPPNVEGKPGASDSEEERQKQRVDAEAQPISKRQLKKLMKQRLWEEQREQRKEKRKEKRKRKKLERRCQLESNSDGNDRKRIRRHVAPSNLRLIIDCSFDDLMVLKDIKKLHKQIQRCYAENRRASHPVQFYLTSHGGQLKKNMDENDQGWVNWKDIHIKSEHYSELIKKEDLVYLTSDSPNVLKDLDESKAYVIGGLVDHNHHKGLTFKQASSYGIKHAQLPLAEFVKMNSRKVLAVNHVFEIILEFLETGDWQEAFFTILPPRKGAVPAHKACESSPQDHQALPGGWDSAIEGEHGRDDPGSPHKEQQGQQSSSVSAVSPDPQ.

2 disordered regions span residues 1–91 (MSSE…DRKR) and 279–335 (VPAH…PDPQ). 2 positions are modified to phosphoserine: Ser22 and Ser24. The segment covering 52-62 (RLWEEQREQRK) has biased composition (basic and acidic residues). Residues 52–84 (RLWEEQREQRKEKRKEKRKRKKLERRCQLESNS) adopt a coiled-coil conformation. The segment covering 63-75 (EKRKEKRKRKKLE) has biased composition (basic residues). Residues 88–279 (DRKRIRRHVA…TILPPRKGAV (192 aa)) form the SAM-dependent MTase TRM10-type domain. Basic and acidic residues predominate over residues 304-319 (EGEHGRDDPGSPHKEQ). The segment covering 320-335 (QGQQSSSVSAVSPDPQ) has biased composition (low complexity). Ser331 carries the post-translational modification Phosphoserine.

It belongs to the class IV-like SAM-binding methyltransferase superfamily. TRM10 family. As to quaternary structure, interacts with tRNA. As to expression, ubiquitously expressed. Is more abundant in brain and pancreatic islets compared to other tissues (at protein level).

The protein resides in the nucleus. It localises to the nucleolus. The catalysed reaction is guanosine(9) in tRNA + S-adenosyl-L-methionine = N(1)-methylguanosine(9) in tRNA + S-adenosyl-L-homocysteine + H(+). Functionally, S-adenosyl-L-methionine-dependent guanine N(1)-methyltransferase that catalyzes the formation of N(1)-methylguanine at position 9 (m1G9) in tRNAs. Probably not able to catalyze formation of N(1)-methyladenine at position 9 (m1A9) in tRNAs. The chain is tRNA methyltransferase 10 homolog A (Trmt10a) from Rattus norvegicus (Rat).